The chain runs to 225 residues: 7-carboxy-7-deazaguanine synthase (225 aa).

Residues 12-14 (IQG) and Arg-27 each bind substrate. The Radical SAM core domain occupies 18-225 (YIGVRQLFVR…PQVHKYLGVR (208 aa)). The [4Fe-4S] cluster site is built by Cys-31, Cys-35, and Cys-38. Position 40 (Thr-40) interacts with Mg(2+). Thr-80 lines the substrate pocket. Gly-82 is an S-adenosyl-L-methionine binding site.

The protein belongs to the radical SAM superfamily. 7-carboxy-7-deazaguanine synthase family. As to quaternary structure, homodimer. It depends on [4Fe-4S] cluster as a cofactor. S-adenosyl-L-methionine serves as cofactor. Mg(2+) is required as a cofactor.

The enzyme catalyses 6-carboxy-5,6,7,8-tetrahydropterin + H(+) = 7-carboxy-7-deazaguanine + NH4(+). It functions in the pathway purine metabolism; 7-cyano-7-deazaguanine biosynthesis. Its function is as follows. Catalyzes the complex heterocyclic radical-mediated conversion of 6-carboxy-5,6,7,8-tetrahydropterin (CPH4) to 7-carboxy-7-deazaguanine (CDG), a step common to the biosynthetic pathways of all 7-deazapurine-containing compounds. The polypeptide is 7-carboxy-7-deazaguanine synthase (Archaeoglobus fulgidus (strain ATCC 49558 / DSM 4304 / JCM 9628 / NBRC 100126 / VC-16)).